The chain runs to 158 residues: Snaclec mucrocetin subunit alpha (158 aa).

The signal sequence occupies residues 1–23 (MGRFIFVSFGLLVVFLSLSGTGA). Intrachain disulfides connect Cys-27–Cys-38, Cys-55–Cys-152, and Cys-127–Cys-144. Residues 34 to 153 (YDRYCYQAFS…CGRENPFVCK (120 aa)) enclose the C-type lectin domain.

Belongs to the snaclec family. As to quaternary structure, tetramer of heterodimers of alpha and beta subunits (alphabeta)(4); disulfide-linked. Expressed by the venom gland.

The protein resides in the secreted. Functionally, platelet-agglutinating factor that acts in a vWF-independent manner. Binds specifically to platelet GPIbalpha (GP1BA) to a distinct binding site from that of flavocetin-A. The polypeptide is Snaclec mucrocetin subunit alpha (Protobothrops mucrosquamatus (Taiwan habu)).